The following is a 154-amino-acid chain: MGPHLLGRSSLLLLLLGMWWSVRPLCAVPKGLTKARWFEIQHIQPRLLQCNKAMSGVNNYTQHCKPENTFLHNVFQDVTAVCDMPNIICKNGRHNCHQSPKPVNLTQCNFIAGRYPDCRYHDDAQYKFFIVACDPPQKTDPPYHLVPVHLDKVV.

The signal sequence occupies residues 1-27 (MGPHLLGRSSLLLLLLGMWWSVRPLCA). His42 functions as the Proton acceptor in the catalytic mechanism. 4 cysteine pairs are disulfide-bonded: Cys50/Cys108, Cys64/Cys118, Cys82/Cys133, and Cys89/Cys96. A glycan (N-linked (GlcNAc...) asparagine) is linked at Asn59. Substrate is bound by residues 65-69 (KPENT) and Lys90. A glycan (N-linked (GlcNAc...) asparagine) is linked at Asn104. His149 acts as the Proton donor in catalysis.

It belongs to the pancreatic ribonuclease family. As to quaternary structure, interacts (via N-terminus) with bacterial lipopolysaccharide (LPS). In terms of tissue distribution, kidney (at protein level).

It localises to the secreted. The protein resides in the lysosome. It is found in the cytoplasmic granule. Ribonuclease which shows a preference for the pyrimidines uridine and cytosine. Has potent antimicrobial activity against a range of Gram-positive and Gram-negative bacteria, including P.aeruginosa, A.baumanii, M.luteus, S.aureus, E.faecalis, E.faecium, S.saprophyticus and E.coli. Causes loss of bacterial membrane integrity, and also promotes agglutination of Gram-negative bacteria. Probably contributes to urinary tract sterility. Bactericidal activity is independent of RNase activity. The sequence is that of Ribonuclease K6 (RNASE6) from Bos taurus (Bovine).